The primary structure comprises 1225 residues: DNA-directed RNA polymerase subunit beta' (1225 aa).

Zn(2+) contacts are provided by C60, C62, C75, and C78. D450, D452, and D454 together coordinate Mg(2+). C818, C892, C899, and C902 together coordinate Zn(2+).

It belongs to the RNA polymerase beta' chain family. In terms of assembly, the RNAP catalytic core consists of 2 alpha, 1 beta, 1 beta' and 1 omega subunit. When a sigma factor is associated with the core the holoenzyme is formed, which can initiate transcription. The cofactor is Mg(2+). Requires Zn(2+) as cofactor.

It carries out the reaction RNA(n) + a ribonucleoside 5'-triphosphate = RNA(n+1) + diphosphate. Its function is as follows. DNA-dependent RNA polymerase catalyzes the transcription of DNA into RNA using the four ribonucleoside triphosphates as substrates. In Streptococcus pneumoniae (strain ATCC 700669 / Spain 23F-1), this protein is DNA-directed RNA polymerase subunit beta'.